The primary structure comprises 407 residues: MVYNNLLERFIKYVKVNTRSNPTSQTTPSTQSQVDFALQVLKPEMEAIGLEDVHYLEHNGYIVGTLPANAQHLTRKIGFISHMDTADFNAEGINPQVIDNYEGGNITLGQSGYLLKPDDFPQLNNYLGQTLVTTDGTTLLGADDKSGIAEIMTAIEFLVANPTIEHCEIRVAFGPDEEIGTGANKFDVEDFNVDFAYTVDGGPLGELQYETFSAAGLDVQFLGRNVHPGTAKGQMINALQLAIDFHNQLPETDRPEKTDGYQGFYHLLDLSGTVEEASSSYIIRDFEDDSFKSRKAFIEQLAQKMNDELGENRVVISLQDQYYNMKKVIEKDMTPVNLAKEVMEDLDIKPIIEPIRGGTDGSKISFMGIPTPNIFAGGENMHGRFEFVSLETMEKAVDVILGIVQKP.

A Zn(2+)-binding site is contributed by His-82. Asp-84 is an active-site residue. Asp-143 provides a ligand contact to Zn(2+). Glu-177 acts as the Proton acceptor in catalysis. 3 residues coordinate Zn(2+): Glu-178, Asp-200, and His-382.

This sequence belongs to the peptidase M20B family. Requires Zn(2+) as cofactor.

It localises to the cytoplasm. It carries out the reaction Release of the N-terminal residue from a tripeptide.. Its function is as follows. Cleaves the N-terminal amino acid of tripeptides. This is Peptidase T from Streptococcus uberis (strain ATCC BAA-854 / 0140J).